The primary structure comprises 495 residues: Neuronal acetylcholine receptor subunit beta-4 (495 aa).

A signal peptide spans 1–20; sequence MRGTPLLLVSLFSLLQDGDC. Residues 21 to 235 are Extracellular-facing; sequence RLANAEEKLM…IIKRKPLFYT (215 aa). Residues asparagine 35, asparagine 92, asparagine 137, and asparagine 165 are each glycosylated (N-linked (GlcNAc...) asparagine). An intrachain disulfide couples cysteine 152 to cysteine 166. The chain crosses the membrane as a helical span at residues 236–256; that stretch reads INLIIPCVLITSLAILVFYLP. At 257–264 the chain is on the cytoplasmic side; sequence SDCGEKMT. Position 261 (glutamate 261) interacts with Na(+). The chain crosses the membrane as a helical span at residues 265–285; that stretch reads LCISVLLALTFFLLLISKIVP. Over 286–297 the chain is Extracellular; sequence PTSLDIPLIGKY. The chain crosses the membrane as a helical span at residues 298–318; sequence LLFTMVLVTFSIVTTVCVLNV. Residues 319 to 463 lie on the Cytoplasmic side of the membrane; the sequence is HHRSPSTHTM…WKFVAMVVDR (145 aa). Residues 464 to 484 form a helical membrane-spanning segment; it reads LFLWVFVFVCILGTMGLFLPP. The Extracellular portion of the chain corresponds to 485-495; it reads LFQIHAPSKDS.

The protein belongs to the ligand-gated ion channel (TC 1.A.9) family. Acetylcholine receptor (TC 1.A.9.1) subfamily. Beta-4/CHRNB4 sub-subfamily. As to quaternary structure, neuronal AChR is composed of two different types of subunits: alpha and beta. CHRNB4/Beta-4 subunit can be combined to CHRNA2/alpha-2, CHRNA3/alpha-3 or CHRNA4/alpha-4, CHRNA5/alpha-5 and CHRNB3/beta-3 to give rise to functional receptors. Forms stoichiometries such as (CHRNA3)2:(CHRNB4)3 or (CHRNA3:CHRNB4)2:CHRNB3. Interacts with RIC3; which is required for proper folding and assembly. Interacts with LYPD6. In terms of tissue distribution, in the brain, it is detected in the medial habenula. In the peripheral nervous system, it is found at least in the adrenal gland.

It is found in the synaptic cell membrane. The protein resides in the cell membrane. It carries out the reaction Ca(2+)(in) = Ca(2+)(out). The catalysed reaction is K(+)(in) = K(+)(out). It catalyses the reaction Na(+)(in) = Na(+)(out). With respect to regulation, activated by a myriad of ligands such as acetylcholine, cytisine, nicotine, choline and epibatidine. nAChR activity is inhibited by the antagonist alpha-conotoxins BuIA and MII, small disulfide-constrained peptides from cone snails. The heteropentamer CHRNA3:CHRNB4 activity is blocked by the alpha-conotoxin ImI and AuIB. In terms of biological role, component of neuronal acetylcholine receptors (nAChRs) that function as pentameric, ligand-gated cation channels with high calcium permeability among other activities. nAChRs are excitatory neurotrasnmitter receptors formed by a collection of nAChR subunits known to mediate synaptic transmission in the nervous system and the neuromuscular junction. Each nAchR subunit confers differential attributes to channel properties, including activation, deactivation and desensitization kinetics, pH sensitivity, cation permeability, and binding to allosteric modulators. CHRNB4 forms heteropentameric neuronal acetylcholine receptors with CHRNA2, CHRNA3 and CHRNA4, as well as CHRNA5 and CHRNB3 as accesory subunits. CHRNA3:CHRNB4 being predominant in neurons of the autonomic ganglia, it is known as ganglionic nicotinic receptor. CHRNA3:CHRNB4 or CHRNA3:CHRNA5:CHRNB4 play also an important role in the habenulo-interpeduncular tract, modulating the mesolimbic dopamine system and affecting reward circuits and addiction. Hypothalamic CHRNA3:CHRNB4 nAChR activation by nicotine leads to activation of POMC neurons and a decrease in food intake. The chain is Neuronal acetylcholine receptor subunit beta-4 (Chrnb4) from Rattus norvegicus (Rat).